Consider the following 195-residue polypeptide: Cysteine/O-acetylserine efflux protein (195 aa).

Over 1 to 9 the chain is Periplasmic; it reads MTPILLSAF. Residues 10-32 traverse the membrane as a helical segment; it reads WTYTLITAMTPGPNNILALSSAT. The Cytoplasmic portion of the chain corresponds to 33–46; the sequence is SHGFRQSTRVLAGM. A helical membrane pass occupies residues 47–67; the sequence is SLGFLIVMLLCAGISFSLAVI. Residues 68 to 69 lie on the Periplasmic side of the membrane; it reads DP. The chain crosses the membrane as a helical span at residues 70 to 90; the sequence is AAVHLLSWAGAAYIVWLAWKI. At 91–104 the chain is on the cytoplasmic side; sequence ATSPTKEDGLQAKP. The chain crosses the membrane as a helical span at residues 105 to 125; that stretch reads ISFWASFALQFVNVKIILYGV. The Periplasmic portion of the chain corresponds to 126–141; that stretch reads TALSTFVLPQTQALSW. A helical membrane pass occupies residues 142-162; it reads VVGVSVLLAMIGTFGNVCWAL. Over 163 to 176 the chain is Cytoplasmic; that stretch reads AGHLFQRLFRQYGR. The chain crosses the membrane as a helical span at residues 177–194; it reads QLNIVLALLLVYCAVRIF. Residue Tyr-195 is a topological domain, periplasmic.

Belongs to the Rht family.

It is found in the cell inner membrane. The catalysed reaction is O-acetyl-L-serine(in) = O-acetyl-L-serine(out). It catalyses the reaction L-cysteine(in) = L-cysteine(out). In terms of biological role, exporter of O-acetylserine (OAS) and cysteine. This chain is Cysteine/O-acetylserine efflux protein (eamB), found in Shigella flexneri serotype 5b (strain 8401).